The primary structure comprises 314 residues: Homoserine O-acetyltransferase (314 aa).

Cys142 serves as the catalytic Acyl-thioester intermediate. Substrate contacts are provided by Lys163 and Ser192. The active-site Proton acceptor is the His235. Residue Glu237 is part of the active site. Position 249 (Arg249) interacts with substrate.

It belongs to the MetA family.

The protein localises to the cytoplasm. It carries out the reaction L-homoserine + acetyl-CoA = O-acetyl-L-homoserine + CoA. It participates in amino-acid biosynthesis; L-methionine biosynthesis via de novo pathway; O-acetyl-L-homoserine from L-homoserine: step 1/1. In terms of biological role, transfers an acetyl group from acetyl-CoA to L-homoserine, forming acetyl-L-homoserine. The protein is Homoserine O-acetyltransferase of Streptococcus pneumoniae (strain JJA).